The following is a 684-amino-acid chain: Glycine--tRNA ligase beta subunit (684 aa).

Belongs to the class-II aminoacyl-tRNA synthetase family. Tetramer of two alpha and two beta subunits.

It is found in the cytoplasm. The catalysed reaction is tRNA(Gly) + glycine + ATP = glycyl-tRNA(Gly) + AMP + diphosphate. The chain is Glycine--tRNA ligase beta subunit from Pseudomonas aeruginosa (strain UCBPP-PA14).